The following is a 124-amino-acid chain: MAISKDDILEAVGNLTVLELNDLVKAFEEKFGVSAAAMAAPAAGGAAGGAAAEEQTEFTVILADFGANKVGVIKAVREITGLGLKEAKDLVDAAPKPLKEGVSKADAEAAKKKLEEAGAKAEIK.

This sequence belongs to the bacterial ribosomal protein bL12 family. As to quaternary structure, homodimer. Part of the ribosomal stalk of the 50S ribosomal subunit. Forms a multimeric L10(L12)X complex, where L10 forms an elongated spine to which 2 to 4 L12 dimers bind in a sequential fashion. Binds GTP-bound translation factors.

In terms of biological role, forms part of the ribosomal stalk which helps the ribosome interact with GTP-bound translation factors. Is thus essential for accurate translation. The sequence is that of Large ribosomal subunit protein bL12 from Herminiimonas arsenicoxydans.